The primary structure comprises 291 residues: Glutathione S-transferase 2 (291 aa).

The GST N-terminal domain occupies 2 to 83; that stretch reads SPVKVFGHPM…YILRKYGGTA (82 aa). Glutathione-binding positions include 41-42, 54-55, and 67-68; these read HK, KM, and KS. Residues 93–223 enclose the GST C-terminal domain; that stretch reads GIEELAMVDV…RVCKHMPTEF (131 aa).

The protein belongs to the GST superfamily. Phi family.

It carries out the reaction RX + glutathione = an S-substituted glutathione + a halide anion + H(+). In terms of biological role, conjugation of reduced glutathione to a wide number of exogenous and endogenous hydrophobic electrophiles. The protein is Glutathione S-transferase 2 (GSTA2) of Triticum aestivum (Wheat).